The primary structure comprises 203 residues: tRNA (pseudouridine(54)-N(1))-methyltransferase (203 aa).

3 residues coordinate S-adenosyl-L-methionine: leucine 125, glycine 146, and cysteine 179.

Belongs to the methyltransferase superfamily. TrmY family. As to quaternary structure, homodimer.

Its subcellular location is the cytoplasm. The catalysed reaction is pseudouridine(54) in tRNA + S-adenosyl-L-methionine = N(1)-methylpseudouridine(54) in tRNA + S-adenosyl-L-homocysteine + H(+). Its function is as follows. Specifically catalyzes the N1-methylation of pseudouridine at position 54 (Psi54) in tRNAs. The polypeptide is tRNA (pseudouridine(54)-N(1))-methyltransferase (Methanopyrus kandleri (strain AV19 / DSM 6324 / JCM 9639 / NBRC 100938)).